We begin with the raw amino-acid sequence, 325 residues long: tRNA (guanine-N(7)-)-methyltransferase (325 aa).

The interval 1–101 (MSEATDKQKQ…LEYPKSPESM (101 aa)) is disordered. Positions 51–69 (VSTTPEPEQSDSSATTATI) are enriched in polar residues. S-adenosyl-L-methionine-binding positions include G122, 145 to 146 (EI), 199 to 200 (NA), and C219. D222 is a catalytic residue. 297-299 (TEE) is a binding site for S-adenosyl-L-methionine.

Belongs to the class I-like SAM-binding methyltransferase superfamily. TrmB family. As to quaternary structure, forms a complex with TRM82.

The protein resides in the nucleus. The enzyme catalyses guanosine(46) in tRNA + S-adenosyl-L-methionine = N(7)-methylguanosine(46) in tRNA + S-adenosyl-L-homocysteine. Its pathway is tRNA modification; N(7)-methylguanine-tRNA biosynthesis. Catalyzes the formation of N(7)-methylguanine at position 46 (m7G46) in tRNA. The chain is tRNA (guanine-N(7)-)-methyltransferase from Candida albicans (strain SC5314 / ATCC MYA-2876) (Yeast).